Reading from the N-terminus, the 908-residue chain is MVEEKTIRLSQVARKLNVATTTIAAYLLEKGFRVENKPNTKITLEQYKILAEEFADSAMDKEEAAELVIGQSYEKEPKVIAKQQEPIKHVHPKEKQVEIEKISLPVIDAPTIIEHKIIEHKTEEPPILQPELPTEEKEELEVIESPQAPQEELKPELETEVQEQDKEIQQELDDTAKVEQAPITKGPEKIDFSKQGEFKGVTVLGKIELAEKKEPKKFQQVASSDIDKKNKKRPRKRVASETGLPSSGKREEEANRYKPKGKVTNKTPEAPKTAVSEKQIQDQIKSTLAKLGGGKNVASRAKYRREKRSLLAEEQAEERLQAAKDAKKLQVTEFIAASDLASLMGVSINQLLSTCMNLGMLVSINQRLDAEAITIIADEFGYQVAFTDVKTQELEEEEEANPEDLVERAPIVTIMGHVDHGKTSLLDYIRNTQITKTEAGGITQHIGAYEVVTESGKHIAFLDTPGHEAFTAMRARGAKLTDIAIIVIAADDGVRPQTKEAINHAKLAGVPIIIAINKMDKPQANPERVKEELAHLNILVEDWGGKYQSQGVSAISGEGVKELLEKILFEAELLELKANSHKKARGTVIEASLDQGRGYLATIMVQDGNLRIGDVVLAGAYYGKIKAMFDYQGKPVKQAGPSTPMQILGLNGAPQAGDLFRAMNTEKEARDIATQRQQILREQGFRTKTHITLDEIGRRLAIGNFKELNIILKGDVDGSVEALSDSLLKLSTEEIKVTILHKGVGAIVESDILLAAASDAIIIGFQVRPTPPVRKLAEKEGIEIRLYSIIYDAINDIKDAMEGMLAPTIEEIITGSASVREIFKITGTGTVAGCYVTEGYIKKNNSIRVIRDGIVIYTGSIKHLKHFKEEMQQVKTGFECGISITNFNDLKVNDVIEGFEQKEVERKL.

2 disordered regions span residues 123-154 and 212-278; these read EEPP…EELK and KKEP…VSEK. The 171-residue stretch at 407 to 577 folds into the tr-type G domain; that stretch reads ERAPIVTIMG…LFEAELLELK (171 aa). Residues 416 to 423 are G1; sequence GHVDHGKT. 416-423 lines the GTP pocket; the sequence is GHVDHGKT. A G2 region spans residues 441–445; sequence GITQH. A G3 region spans residues 463-466; sequence DTPG. Residues 463–467 and 517–520 contribute to the GTP site; these read DTPGH and NKMD. Positions 517 to 520 are G4; sequence NKMD. Positions 553-555 are G5; that stretch reads SAI.

The protein belongs to the TRAFAC class translation factor GTPase superfamily. Classic translation factor GTPase family. IF-2 subfamily.

It localises to the cytoplasm. One of the essential components for the initiation of protein synthesis. Protects formylmethionyl-tRNA from spontaneous hydrolysis and promotes its binding to the 30S ribosomal subunits. Also involved in the hydrolysis of GTP during the formation of the 70S ribosomal complex. The chain is Translation initiation factor IF-2 from Amoebophilus asiaticus (strain 5a2).